A 572-amino-acid polypeptide reads, in one-letter code: Proline--tRNA ligase (572 aa).

Belongs to the class-II aminoacyl-tRNA synthetase family. ProS type 1 subfamily. In terms of assembly, homodimer.

The protein localises to the cytoplasm. It carries out the reaction tRNA(Pro) + L-proline + ATP = L-prolyl-tRNA(Pro) + AMP + diphosphate. Its function is as follows. Catalyzes the attachment of proline to tRNA(Pro) in a two-step reaction: proline is first activated by ATP to form Pro-AMP and then transferred to the acceptor end of tRNA(Pro). As ProRS can inadvertently accommodate and process non-cognate amino acids such as alanine and cysteine, to avoid such errors it has two additional distinct editing activities against alanine. One activity is designated as 'pretransfer' editing and involves the tRNA(Pro)-independent hydrolysis of activated Ala-AMP. The other activity is designated 'posttransfer' editing and involves deacylation of mischarged Ala-tRNA(Pro). The misacylated Cys-tRNA(Pro) is not edited by ProRS. The chain is Proline--tRNA ligase from Alteromonas mediterranea (strain DSM 17117 / CIP 110805 / LMG 28347 / Deep ecotype).